The primary structure comprises 379 residues: Cytochrome b (379 aa).

The next 4 helical transmembrane spans lie at 33–53 (FGSLLGICLILQILTGLFLAM), 77–98 (WMIRYMHANGASLFFICLFMHV), 113–133 (WNIGILLLLTVMATAFMGYVL), and 178–198 (FFAFHFILPFIISALAAVHLL). H83 and H97 together coordinate heme b. Positions 182 and 196 each coordinate heme b. H201 provides a ligand contact to a ubiquinone. 4 helical membrane passes run 226 to 246 (IKDILGLLFLILALMLLVLFS), 288 to 308 (LGGVLPHAMSILILPIIPMLH), 320 to 340 (LSQCMFWLLVADLPILTWIGG), and 347 to 367 (FITIGQLASVYISSILLXLMP).

Belongs to the cytochrome b family. In terms of assembly, the cytochrome bc1 complex contains 11 subunits: 3 respiratory subunits (MT-CYB, CYC1 and UQCRFS1), 2 core proteins (UQCRC1 and UQCRC2) and 6 low-molecular weight proteins (UQCRH/QCR6, UQCRB/QCR7, UQCRQ/QCR8, UQCR10/QCR9, UQCR11/QCR10 and a cleavage product of UQCRFS1). This cytochrome bc1 complex then forms a dimer. Heme b is required as a cofactor.

The protein resides in the mitochondrion inner membrane. In terms of biological role, component of the ubiquinol-cytochrome c reductase complex (complex III or cytochrome b-c1 complex) that is part of the mitochondrial respiratory chain. The b-c1 complex mediates electron transfer from ubiquinol to cytochrome c. Contributes to the generation of a proton gradient across the mitochondrial membrane that is then used for ATP synthesis. The polypeptide is Cytochrome b (MT-CYB) (Chrotogale owstoni (Owston's palm civet)).